The sequence spans 229 residues: Claudin-25 (229 aa).

Over 1–10 (MAWSFRAKVQ) the chain is Cytoplasmic. A helical membrane pass occupies residues 11–31 (LGGLLLSLLGWVCSCVTTILP). The Extracellular portion of the chain corresponds to 32–81 (QWKTLNLELNEMETWIMGIWEVCVDREEVATVCKAFESFLSLPQELQVAR). The chain crosses the membrane as a helical span at residues 82–102 (ILMVASHGLGLLGLLLCSFGS). Residues 103-124 (ECFQFHRIRWVFKRRLGLLGRT) are Cytoplasmic-facing. The chain crosses the membrane as a helical span at residues 125-145 (LEASASATTLLPVSWVAHATI). Residues 146-164 (QDFWDDSIPDIIPRWEFGG) lie on the Extracellular side of the membrane. Residues 165 to 185 (ALYLGWAAGIFLALGGLLLIF) form a helical membrane-spanning segment. Over 186 to 229 (SACLGKEDVPFPLMAGPTVPLSCAPVEESDGSFHLMLRPRNLVI) the chain is Cytoplasmic.

This sequence belongs to the claudin family.

The protein resides in the cell junction. The protein localises to the tight junction. It localises to the cell membrane. Its function is as follows. Plays a major role in tight junction-specific obliteration of the intercellular space, through calcium-independent cell-adhesion activity. The sequence is that of Claudin-25 (CLDN25) from Homo sapiens (Human).